Reading from the N-terminus, the 62-residue chain is uncharacterized protein (62 aa).

This is an uncharacterized protein from Bacillus subtilis (strain 168).